We begin with the raw amino-acid sequence, 567 residues long: ERO1-like protein 2 (567 aa).

The first 22 residues, 1 to 22 (MKIAKGLVGLLILYKNVCQVLC), serve as a signal peptide directing secretion. Asparagine 49 carries N-linked (GlcNAc...) asparagine glycosylation. 4 disulfides stabilise this stretch: cysteine 88–cysteine 386, cysteine 98–cysteine 103, cysteine 154–cysteine 325, and cysteine 389–cysteine 392. The FAD site is built by arginine 188, threonine 190, tryptophan 201, serine 258, histidine 261, and lysine 290. Residue cysteine 389 is the Nucleophile of the active site. Cysteine 392 is a catalytic residue. The N-linked (GlcNAc...) asparagine glycan is linked to asparagine 546.

The protein belongs to the EROs family. As to quaternary structure, may function both as a monomer and a homodimer. It depends on FAD as a cofactor. Post-translationally, N-glycosylated.

The protein localises to the endoplasmic reticulum membrane. Functionally, essential oxidoreductase that oxidizes proteins in the endoplasmic reticulum to produce disulfide bonds. Acts by oxidizing directly pdi1 isomerase through a direct disulfide exchange. Does not act as a direct oxidant of folding substrate, but relies on pdi1 to transfer oxidizing equivalent. Does not oxidize all pdi related proteins, suggesting that it can discriminate between pdi1 and related proteins. Its reoxidation probably involves electron transfer to molecular oxygen via FAD. Acts independently of glutathione. May be responsible for a significant proportion of reactive oxygen species (ROS) in the cell, thereby being a source of oxidative stress. The protein is ERO1-like protein 2 (ero12) of Schizosaccharomyces pombe (strain 972 / ATCC 24843) (Fission yeast).